The sequence spans 238 residues: Pyridoxine 5'-phosphate synthase (238 aa).

Asn-6 is a 3-amino-2-oxopropyl phosphate binding site. 8–9 provides a ligand contact to 1-deoxy-D-xylulose 5-phosphate; the sequence is DH. Position 17 (Arg-17) interacts with 3-amino-2-oxopropyl phosphate. His-42 (proton acceptor) is an active-site residue. 1-deoxy-D-xylulose 5-phosphate contacts are provided by Arg-44 and His-49. Glu-69 functions as the Proton acceptor in the catalytic mechanism. Thr-99 is a binding site for 1-deoxy-D-xylulose 5-phosphate. The active-site Proton donor is His-186. Residues Gly-187 and 208–209 contribute to the 3-amino-2-oxopropyl phosphate site; that span reads GH.

Belongs to the PNP synthase family. As to quaternary structure, homooctamer; tetramer of dimers.

Its subcellular location is the cytoplasm. The catalysed reaction is 3-amino-2-oxopropyl phosphate + 1-deoxy-D-xylulose 5-phosphate = pyridoxine 5'-phosphate + phosphate + 2 H2O + H(+). Its pathway is cofactor biosynthesis; pyridoxine 5'-phosphate biosynthesis; pyridoxine 5'-phosphate from D-erythrose 4-phosphate: step 5/5. Catalyzes the complicated ring closure reaction between the two acyclic compounds 1-deoxy-D-xylulose-5-phosphate (DXP) and 3-amino-2-oxopropyl phosphate (1-amino-acetone-3-phosphate or AAP) to form pyridoxine 5'-phosphate (PNP) and inorganic phosphate. This Anaplasma marginale (strain St. Maries) protein is Pyridoxine 5'-phosphate synthase.